A 203-amino-acid polypeptide reads, in one-letter code: Thymidylate kinase (203 aa).

10–17 (GIDGAGKS) serves as a coordination point for ATP.

It belongs to the thymidylate kinase family.

The enzyme catalyses dTMP + ATP = dTDP + ADP. Phosphorylation of dTMP to form dTDP in both de novo and salvage pathways of dTTP synthesis. This Cupriavidus taiwanensis (strain DSM 17343 / BCRC 17206 / CCUG 44338 / CIP 107171 / LMG 19424 / R1) (Ralstonia taiwanensis (strain LMG 19424)) protein is Thymidylate kinase.